The chain runs to 968 residues: RNA polymerase-associated protein RapA (968 aa).

Residues 164–334 (DVGRRHAPRV…FARLRLLDPN (171 aa)) enclose the Helicase ATP-binding domain. Position 177 to 184 (177 to 184 (DEVGLGKT)) interacts with ATP. The short motif at 280–283 (DEAH) is the DEAH box element. The Helicase C-terminal domain occupies 490–662 (RVEWLMGYLT…YLASPDQTEG (173 aa)).

It belongs to the SNF2/RAD54 helicase family. RapA subfamily. In terms of assembly, interacts with the RNAP. Has a higher affinity for the core RNAP than for the holoenzyme. Its ATPase activity is stimulated by binding to RNAP.

Its function is as follows. Transcription regulator that activates transcription by stimulating RNA polymerase (RNAP) recycling in case of stress conditions such as supercoiled DNA or high salt concentrations. Probably acts by releasing the RNAP, when it is trapped or immobilized on tightly supercoiled DNA. Does not activate transcription on linear DNA. Probably not involved in DNA repair. This chain is RNA polymerase-associated protein RapA, found in Escherichia coli (strain 55989 / EAEC).